The primary structure comprises 301 residues: MLTFQQIILTLQEYWDKQGCALLQPYDMEVGAGTSHTATFLRAIGPEPWRAAYVQPSRRPKDGRYGENPNRLQHYYQYQVVLKPAPPEILDLYIGSLKALGIDPAQHDIRFVEDDWENPTLGAWGLGWEVWLNGMEVTQFTYFQQVGGLDCTPTTGEITYGLERLAMYLQNVESVYDLVWTEGANGQRVLYRDVFHQNEVEQSTYNFEHSSAEMLFAHFNDYEAEAKRLMEVPLALPAYEAALKAAHTFNMLDARGAISVTERAAYIGRIRNLSRAVAQAYYDSRERLGFPMLRNKAGEAA.

The protein belongs to the class-II aminoacyl-tRNA synthetase family. As to quaternary structure, tetramer of two alpha and two beta subunits.

It is found in the cytoplasm. The enzyme catalyses tRNA(Gly) + glycine + ATP = glycyl-tRNA(Gly) + AMP + diphosphate. In Bordetella avium (strain 197N), this protein is Glycine--tRNA ligase alpha subunit.